Here is a 246-residue protein sequence, read N- to C-terminus: Sugar fermentation stimulation protein homolog (246 aa).

This sequence belongs to the SfsA family.

This is Sugar fermentation stimulation protein homolog from Prochlorococcus marinus (strain MIT 9312).